A 127-amino-acid chain; its full sequence is MARVKRAVNAHKKRRVVLERASGYRGQRSRLYRKAKEQLLHSFNYNFRDRKARKGDFRKLWIQRINAAVRAEGITYNRFIQGLRLAGIELDRRALAEIAVSDPNTFKTIVDAAKAALPEDVNAPVEA.

Belongs to the bacterial ribosomal protein bL20 family.

Binds directly to 23S ribosomal RNA and is necessary for the in vitro assembly process of the 50S ribosomal subunit. It is not involved in the protein synthesizing functions of that subunit. This Bifidobacterium longum (strain NCC 2705) protein is Large ribosomal subunit protein bL20.